The chain runs to 89 residues: Small ribosomal subunit protein bS16 (89 aa).

This sequence belongs to the bacterial ribosomal protein bS16 family.

This chain is Small ribosomal subunit protein bS16, found in Desulforamulus reducens (strain ATCC BAA-1160 / DSM 100696 / MI-1) (Desulfotomaculum reducens).